The sequence spans 181 residues: Transcription factor bHLH167 (181 aa).

The interval 1–22 (MGRAREIGEGNSSSLREQRNLR) is disordered. The bHLH domain maps to 14-63 (SLREQRNLREKDRRMRMKHLFSILSSHVSPTRKLPVPHLIDQATSYMIQL).

Belongs to the bHLH protein family.

The protein resides in the nucleus. This Arabidopsis thaliana (Mouse-ear cress) protein is Transcription factor bHLH167.